Reading from the N-terminus, the 281-residue chain is Bifunctional protein FolD (281 aa).

Residues 165–167 (GRG), Thr-192, and Val-233 contribute to the NADP(+) site.

It belongs to the tetrahydrofolate dehydrogenase/cyclohydrolase family. In terms of assembly, homodimer.

The enzyme catalyses (6R)-5,10-methylene-5,6,7,8-tetrahydrofolate + NADP(+) = (6R)-5,10-methenyltetrahydrofolate + NADPH. The catalysed reaction is (6R)-5,10-methenyltetrahydrofolate + H2O = (6R)-10-formyltetrahydrofolate + H(+). Its pathway is one-carbon metabolism; tetrahydrofolate interconversion. Catalyzes the oxidation of 5,10-methylenetetrahydrofolate to 5,10-methenyltetrahydrofolate and then the hydrolysis of 5,10-methenyltetrahydrofolate to 10-formyltetrahydrofolate. This is Bifunctional protein FolD from Mycobacteroides abscessus (strain ATCC 19977 / DSM 44196 / CCUG 20993 / CIP 104536 / JCM 13569 / NCTC 13031 / TMC 1543 / L948) (Mycobacterium abscessus).